The sequence spans 351 residues: ADP-glucose phosphorylase (351 aa).

A disordered region spans residues 1–63 (MTSPSHASDR…QNPNPKPSSC (63 aa)). Residue 41-44 (RAKR) participates in ADP-alpha-D-glucose binding. Residues C63 and C66 each coordinate Zn(2+). Residues 72–74 (ECA) and N94 contribute to the ADP-alpha-D-glucose site. A Zn(2+)-binding site is contributed by H133. Residues N173 and 179–182 (GASM) each bind ADP-alpha-D-glucose. H184 provides a ligand contact to Zn(2+). H186 functions as the Tele-AMP-histidine intermediate in the catalytic mechanism. An ADP-alpha-D-glucose-binding site is contributed by Q188. Zn(2+)-binding residues include C216, C219, H255, and H310. ADP-alpha-D-glucose is bound by residues G321 and 325 to 326 (FE).

Belongs to the galactose-1-phosphate uridylyltransferase type 1 family. Homodimer. The cofactor is Zn(2+).

The catalysed reaction is alpha-D-glucose 1-phosphate + ADP + H(+) = ADP-alpha-D-glucose + phosphate. Functionally, catalyzes the conversion of ADP-glucose and inorganic phosphate (Pi) into glucose-1-phosphate and ADP. Does not possess galactose-1-phosphate uridylyltransferase activity. In Arabidopsis thaliana (Mouse-ear cress), this protein is ADP-glucose phosphorylase.